The sequence spans 528 residues: Phosphoenolpyruvate carboxykinase (ATP) (528 aa).

Residues arginine 56, tyrosine 192, and lysine 198 each coordinate substrate. Residues lysine 198, histidine 217, and 233-241 (GLSGTGKTT) contribute to the ATP site. Lysine 198 and histidine 217 together coordinate Mn(2+). Residue aspartate 254 coordinates Mn(2+). Positions 282, 319, and 444 each coordinate ATP. Arginine 319 is a substrate binding site.

The protein belongs to the phosphoenolpyruvate carboxykinase (ATP) family. The cofactor is Mn(2+).

It localises to the cytoplasm. It catalyses the reaction oxaloacetate + ATP = phosphoenolpyruvate + ADP + CO2. The protein operates within carbohydrate biosynthesis; gluconeogenesis. Functionally, involved in the gluconeogenesis. Catalyzes the conversion of oxaloacetate (OAA) to phosphoenolpyruvate (PEP) through direct phosphoryl transfer between the nucleoside triphosphate and OAA. This Lysinibacillus sphaericus (strain C3-41) protein is Phosphoenolpyruvate carboxykinase (ATP).